A 479-amino-acid chain; its full sequence is UDP-N-acetylmuramoylalanine--D-glutamate ligase (479 aa).

Position 110-116 (110-116) interacts with ATP; it reads GTNGKTS.

It belongs to the MurCDEF family.

It localises to the cytoplasm. It carries out the reaction UDP-N-acetyl-alpha-D-muramoyl-L-alanine + D-glutamate + ATP = UDP-N-acetyl-alpha-D-muramoyl-L-alanyl-D-glutamate + ADP + phosphate + H(+). The protein operates within cell wall biogenesis; peptidoglycan biosynthesis. Cell wall formation. Catalyzes the addition of glutamate to the nucleotide precursor UDP-N-acetylmuramoyl-L-alanine (UMA). This Bifidobacterium adolescentis (strain ATCC 15703 / DSM 20083 / NCTC 11814 / E194a) protein is UDP-N-acetylmuramoylalanine--D-glutamate ligase.